The primary structure comprises 249 residues: Cytochrome c oxidase subunit 2 (249 aa).

A signal peptide spans 1–13 (MLNLFQIMNMINN). Over 14 to 40 (DVPTPYGFYFQDSATPNQEGILELHDN) the chain is Mitochondrial intermembrane. Residues 41-62 (IMFYLVVILGLVSWMLFTIVRT) form a helical membrane-spanning segment. Residues 63-80 (YSRNPMAYKYIKHGQTIE) lie on the Mitochondrial matrix side of the membrane. A helical membrane pass occupies residues 81-105 (IIWKIFPAVILLTIAFPSFILLYLC). At 106–249 (DEVISPAMTI…PKFLEWLNEQ (144 aa)) the chain is on the mitochondrial intermembrane side. Histidine 184, cysteine 219, glutamate 221, cysteine 223, histidine 227, and methionine 230 together coordinate Cu cation. Glutamate 221 lines the Mg(2+) pocket.

It belongs to the cytochrome c oxidase subunit 2 family. Component of the cytochrome c oxidase (complex IV, CIV), a multisubunit enzyme composed of a catalytic core of 3 subunits and several supernumerary subunits. The complex exists as a monomer or a dimer and forms supercomplexes (SCs) in the inner mitochondrial membrane with ubiquinol-cytochrome c oxidoreductase (cytochrome b-c1 complex, complex III, CIII). The cofactor is Cu cation. Post-translationally, the signal sequence of COX2 is processed by IMP1.

The protein resides in the mitochondrion inner membrane. It carries out the reaction 4 Fe(II)-[cytochrome c] + O2 + 8 H(+)(in) = 4 Fe(III)-[cytochrome c] + 2 H2O + 4 H(+)(out). Component of the cytochrome c oxidase, the last enzyme in the mitochondrial electron transport chain which drives oxidative phosphorylation. The respiratory chain contains 3 multisubunit complexes succinate dehydrogenase (complex II, CII), ubiquinol-cytochrome c oxidoreductase (cytochrome b-c1 complex, complex III, CIII) and cytochrome c oxidase (complex IV, CIV), that cooperate to transfer electrons derived from NADH and succinate to molecular oxygen, creating an electrochemical gradient over the inner membrane that drives transmembrane transport and the ATP synthase. Cytochrome c oxidase is the component of the respiratory chain that catalyzes the reduction of oxygen to water. Electrons originating from reduced cytochrome c in the intermembrane space (IMS) are transferred via the dinuclear copper A center (CU(A)) of subunit 2 and heme A of subunit 1 to the active site in subunit 1, a binuclear center (BNC) formed by heme A3 and copper B (CU(B)). The BNC reduces molecular oxygen to 2 water molecules using 4 electrons from cytochrome c in the IMS and 4 protons from the mitochondrial matrix. This is Cytochrome c oxidase subunit 2 (COX2) from Maudiozyma exigua (Yeast).